A 63-amino-acid polypeptide reads, in one-letter code: Large ribosomal subunit protein uL29 (63 aa).

This sequence belongs to the universal ribosomal protein uL29 family.

The sequence is that of Large ribosomal subunit protein uL29 from Photobacterium profundum (strain SS9).